The chain runs to 242 residues: Uridylate kinase (242 aa).

15-18 (KLSG) lines the ATP pocket. Positions 23–28 (GDEGFG) are involved in allosteric activation by GTP. Glycine 57 lines the UMP pocket. ATP is bound by residues glycine 58 and arginine 62. Residues aspartate 77 and 138–145 (TGNPFCTT) contribute to the UMP site. The ATP site is built by threonine 165, tyrosine 171, and aspartate 174.

Belongs to the UMP kinase family. Homohexamer.

It localises to the cytoplasm. The enzyme catalyses UMP + ATP = UDP + ADP. It participates in pyrimidine metabolism; CTP biosynthesis via de novo pathway; UDP from UMP (UMPK route): step 1/1. Its activity is regulated as follows. Allosterically activated by GTP. Inhibited by UTP. Functionally, catalyzes the reversible phosphorylation of UMP to UDP. The sequence is that of Uridylate kinase from Shewanella sp. (strain MR-4).